Here is a 188-residue protein sequence, read N- to C-terminus: Peptidyl-tRNA hydrolase (188 aa).

Tyr-14 serves as a coordination point for tRNA. The active-site Proton acceptor is the His-19. Residues Tyr-64, Asn-66, and Asn-112 each contribute to the tRNA site.

It belongs to the PTH family. As to quaternary structure, monomer.

It is found in the cytoplasm. The enzyme catalyses an N-acyl-L-alpha-aminoacyl-tRNA + H2O = an N-acyl-L-amino acid + a tRNA + H(+). Its function is as follows. Hydrolyzes ribosome-free peptidyl-tRNAs (with 1 or more amino acids incorporated), which drop off the ribosome during protein synthesis, or as a result of ribosome stalling. Catalyzes the release of premature peptidyl moieties from peptidyl-tRNA molecules trapped in stalled 50S ribosomal subunits, and thus maintains levels of free tRNAs and 50S ribosomes. The polypeptide is Peptidyl-tRNA hydrolase (Clostridium tetani (strain Massachusetts / E88)).